The sequence spans 36 residues: Photosystem II reaction center protein M (36 aa).

The chain crosses the membrane as a helical span at residues Ile-5 to Leu-25.

Belongs to the PsbM family. In terms of assembly, PSII is composed of 1 copy each of membrane proteins PsbA, PsbB, PsbC, PsbD, PsbE, PsbF, PsbH, PsbI, PsbJ, PsbK, PsbL, PsbM, PsbT, PsbX, PsbY, PsbZ, Psb30/Ycf12, at least 3 peripheral proteins of the oxygen-evolving complex and a large number of cofactors. It forms dimeric complexes.

It localises to the plastid. It is found in the chloroplast thylakoid membrane. In terms of biological role, one of the components of the core complex of photosystem II (PSII). PSII is a light-driven water:plastoquinone oxidoreductase that uses light energy to abstract electrons from H(2)O, generating O(2) and a proton gradient subsequently used for ATP formation. It consists of a core antenna complex that captures photons, and an electron transfer chain that converts photonic excitation into a charge separation. This subunit is found at the monomer-monomer interface. In Chlorokybus atmophyticus (Soil alga), this protein is Photosystem II reaction center protein M.